A 252-amino-acid polypeptide reads, in one-letter code: Imidazole glycerol phosphate synthase subunit HisF (252 aa).

Active-site residues include D11 and D130.

Belongs to the HisA/HisF family. In terms of assembly, heterodimer of HisH and HisF.

It localises to the cytoplasm. It catalyses the reaction 5-[(5-phospho-1-deoxy-D-ribulos-1-ylimino)methylamino]-1-(5-phospho-beta-D-ribosyl)imidazole-4-carboxamide + L-glutamine = D-erythro-1-(imidazol-4-yl)glycerol 3-phosphate + 5-amino-1-(5-phospho-beta-D-ribosyl)imidazole-4-carboxamide + L-glutamate + H(+). It participates in amino-acid biosynthesis; L-histidine biosynthesis; L-histidine from 5-phospho-alpha-D-ribose 1-diphosphate: step 5/9. Functionally, IGPS catalyzes the conversion of PRFAR and glutamine to IGP, AICAR and glutamate. The HisF subunit catalyzes the cyclization activity that produces IGP and AICAR from PRFAR using the ammonia provided by the HisH subunit. The protein is Imidazole glycerol phosphate synthase subunit HisF of Syntrophomonas wolfei subsp. wolfei (strain DSM 2245B / Goettingen).